A 341-amino-acid chain; its full sequence is Putative UPF0607 protein ENSP00000383783 (341 aa).

Over residues 75 to 101 (EVRAEEPKEATEVKDQVETQGQEDNKR) the composition is skewed to basic and acidic residues. Disordered stretches follow at residues 75-115 (EVRA…TSSL) and 216-278 (GLLM…PPPA). Positions 234–245 (SSRSSPSRAASH) are enriched in low complexity.

Belongs to the UPF0607 family.

This chain is Putative UPF0607 protein ENSP00000383783, found in Homo sapiens (Human).